A 331-amino-acid polypeptide reads, in one-letter code: Mitochondrial carrier protein CoAc1 (331 aa).

6 consecutive transmembrane segments (helical) span residues 16–36 (LVDT…AGAI), 79–99 (FYKG…LHYM), 123–143 (LVAG…LDLA), 193–213 (GIGP…YIYE), 231–251 (LPCG…LDVV), and 292–312 (FAGL…GFTV). Solcar repeat units lie at residues 21–107 (PVLA…YRDW), 117–218 (SGPI…LKRH), and 225–319 (NSVR…MKSW).

The protein belongs to the mitochondrial carrier (TC 2.A.29) family. Expressed throughout the plant.

It is found in the mitochondrion inner membrane. Its function is as follows. Required for the accumulation of coenzyme A in the mitochondrial matrix. The sequence is that of Mitochondrial carrier protein CoAc1 from Arabidopsis thaliana (Mouse-ear cress).